The following is a 773-amino-acid chain: Glucan endo-1,3-beta-D-glucosidase (773 aa).

The tract at residues 1–194 (MPPGAKVPQA…KNYFSIAVLP (194 aa)) is beta-sandwich subdomain. The GH81 domain maps to 1-647 (MPPGAKVPQA…HWICNLDSLG (647 aa)). The Mg(2+) site is built by isoleucine 31, asparagine 34, glutamine 35, tyrosine 36, and alanine 89. The interval 195–288 (DNTVSTLTYY…QGTSFKTVYR (94 aa)) is alpha/beta subdomain. Positions 298–647 (DKGTYDREAL…HWICNLDSLG (350 aa)) are (alpha/beta)6 barrel subdomain. Positions 327 and 331 each coordinate (1,3-beta-D-glucosyl)n. Positions 365, 368, 373, and 376 each coordinate Ca(2+). The (1,3-beta-D-glucosyl)n site is built by aspartate 402 and histidine 406. Aspartate 402 is an active-site residue. The Ca(2+) site is built by leucine 454, arginine 455, and phenylalanine 457. (1,3-beta-D-glucosyl)n-binding residues include asparagine 477, glutamate 479, and glutamate 483. Active-site residues include glutamate 479 and glutamate 483. Residues lysine 527, lysine 618, asparagine 619, and tryptophan 621 each coordinate Mg(2+). Ca(2+) is bound by residues aspartate 712, asparagine 714, aspartate 716, glycine 717, lysine 718, aspartate 723, aspartate 748, isoleucine 749, asparagine 750, aspartate 752, lysine 754, and aspartate 759.

Belongs to the glycosyl hydrolase 81 family. Ca(2+) is required as a cofactor. It depends on Mg(2+) as a cofactor.

It localises to the secreted. The enzyme catalyses Hydrolysis of (1-&gt;3)-beta-D-glucosidic linkages in (1-&gt;3)-beta-D-glucans.. Inhibited by manganese, zinc, and copper ions. In terms of biological role, cleaves internal linkages in 1,3-beta-glucan. May contribute to plant biomass degradation. In Acetivibrio thermocellus (strain ATCC 27405 / DSM 1237 / JCM 9322 / NBRC 103400 / NCIMB 10682 / NRRL B-4536 / VPI 7372) (Clostridium thermocellum), this protein is Glucan endo-1,3-beta-D-glucosidase.